We begin with the raw amino-acid sequence, 288 residues long: Galactose/N-acetyl-D-galactosamine lectin light subunit 1 (288 aa).

The first 15 residues, 1-15 (MIILVLLISYSFGKT), serve as a signal peptide directing secretion. 2 N-linked (GlcNAc...) asparagine glycosylation sites follow: N205 and N261.

Heterodimer composed of a 170 kDa heavy subunit (hgl) and a 31/35 kDa light subunit (lgl); disulfide-linked.

Its subcellular location is the cell membrane. Light subunit of a heterodimeric lectin; the heavy subunit binds galactose and N-acetyl-D-galactosamine of host glycoproteins and thus mediates adhesion to host cells. The sequence is that of Galactose/N-acetyl-D-galactosamine lectin light subunit 1 from Entamoeba histolytica (strain ATCC 30459 / HM-1:IMSS / ABRM).